A 258-amino-acid polypeptide reads, in one-letter code: Small ribosomal subunit protein uS2 (258 aa).

This sequence belongs to the universal ribosomal protein uS2 family.

The protein is Small ribosomal subunit protein uS2 of Streptococcus suis (strain 05ZYH33).